The chain runs to 561 residues: Inner membrane ABC transporter ATP-binding protein YddA (561 aa).

Residues Met-1–Thr-3 lie on the Cytoplasmic side of the membrane. The chain crosses the membrane as a helical span at residues Ile-4 to Leu-24. Residues Arg-25–Ser-31 are Periplasmic-facing. A helical transmembrane segment spans residues Val-32–Leu-52. The ABC transmembrane type-1 domain occupies Ile-35–Glu-337. Residues Asn-53–Lys-70 lie on the Cytoplasmic side of the membrane. The helical transmembrane segment at Leu-71 to Asn-91 threads the bilayer. Residues Lys-92–Thr-151 lie on the Periplasmic side of the membrane. A helical membrane pass occupies residues Leu-152–Leu-172. The Cytoplasmic segment spans residues Trp-173–Glu-187. A helical transmembrane segment spans residues Trp-188 to Phe-208. Topologically, residues Thr-209–Ser-290 are periplasmic. Residues Val-291–Leu-311 form a helical membrane-spanning segment. The Cytoplasmic portion of the chain corresponds to Met-312–Leu-561. The ABC transporter domain occupies Val-367 to Leu-561. Gly-400–Thr-407 lines the ATP pocket.

Belongs to the ABC transporter superfamily.

The protein resides in the cell inner membrane. The chain is Inner membrane ABC transporter ATP-binding protein YddA (yddA) from Escherichia coli (strain K12).